The following is a 508-amino-acid chain: Light-independent protochlorophyllide reductase subunit B (508 aa).

A [4Fe-4S] cluster-binding site is contributed by Asp36. Residue Asp294 is the Proton donor of the active site. 429–430 (GM) serves as a coordination point for substrate.

This sequence belongs to the ChlB/BchB/BchZ family. As to quaternary structure, protochlorophyllide reductase is composed of three subunits; ChlL, ChlN and ChlB. Forms a heterotetramer of two ChlB and two ChlN subunits. It depends on [4Fe-4S] cluster as a cofactor.

The catalysed reaction is chlorophyllide a + oxidized 2[4Fe-4S]-[ferredoxin] + 2 ADP + 2 phosphate = protochlorophyllide a + reduced 2[4Fe-4S]-[ferredoxin] + 2 ATP + 2 H2O. The protein operates within porphyrin-containing compound metabolism; chlorophyll biosynthesis (light-independent). Functionally, component of the dark-operative protochlorophyllide reductase (DPOR) that uses Mg-ATP and reduced ferredoxin to reduce ring D of protochlorophyllide (Pchlide) to form chlorophyllide a (Chlide). This reaction is light-independent. The NB-protein (ChlN-ChlB) is the catalytic component of the complex. The chain is Light-independent protochlorophyllide reductase subunit B from Rippkaea orientalis (strain PCC 8801 / RF-1) (Cyanothece sp. (strain PCC 8801)).